The following is a 507-amino-acid chain: MLWYIVAGAGGLLIGYLIANYQINQKLRKAKEDAQTIIEKAEKEANEIKKKAIIEGREEVHRLREEFEKERSRREEELRALEERLLKREELLTRKEENLEKREQQVEELKANLEEKMREVEEKEKRIDEELKRLAGMTVEEARELILEEARQRYEHDLAKLYKEMKEQVEEEAEKEAKKVIAFAVQRYAPDYVGEITVSTVSLPSDDMKGRIIGREGRNIRTFEKITGVDLIIDDTPEVVVLSCFNPLRREIARITLEKLVADGRIHPARIEEMYEKAKQEVEKAIKEAGQEATFKAGVMGLHPELVKLLGKLKYRTSYGQNVLNHSIEVALLAGYMASELGLNADKARRGGLLHDIGKAVDQELEGSHTTIGAELARRYGEKEDIINMILSHHGEEEPMTPEAVLVAAADALSAARPGARRESLENYIKRLMKLEEIAKSFKYVEKAYAIQAGREIRVIVEPDKVDDALAEKLAYDISKKIEEELEYPGVLKVVVIREKRSVAYAK.

The helical transmembrane segment at 1–21 (MLWYIVAGAGGLLIGYLIANY) threads the bilayer. Residues 197–282 (TVSTVSLPSD…EMYEKAKQEV (86 aa)) form the KH domain. An HD domain is found at 323–416 (VLNHSIEVAL…VAAADALSAA (94 aa)).

The protein belongs to the RNase Y family.

Its subcellular location is the cell membrane. In terms of biological role, endoribonuclease that initiates mRNA decay. In Thermotoga sp. (strain RQ2), this protein is Ribonuclease Y.